Here is a 478-residue protein sequence, read N- to C-terminus: Argininosuccinate lyase (478 aa).

Belongs to the lyase 1 family. Argininosuccinate lyase subfamily.

It is found in the cytoplasm. It carries out the reaction 2-(N(omega)-L-arginino)succinate = fumarate + L-arginine. It participates in amino-acid biosynthesis; L-arginine biosynthesis; L-arginine from L-ornithine and carbamoyl phosphate: step 3/3. The chain is Argininosuccinate lyase from Leptospira biflexa serovar Patoc (strain Patoc 1 / Ames).